The primary structure comprises 1241 residues: DNA-directed RNA polymerase subunit beta (1241 aa).

The interval 1186 to 1210 (EDEIVPTAEKRSSNQDEEALELVDN) is disordered. Acidic residues predominate over residues 1200–1210 (QDEEALELVDN).

It belongs to the RNA polymerase beta chain family. As to quaternary structure, the RNAP catalytic core consists of 2 alpha, 1 beta, 1 beta' and 1 omega subunit. When a sigma factor is associated with the core the holoenzyme is formed, which can initiate transcription.

The enzyme catalyses RNA(n) + a ribonucleoside 5'-triphosphate = RNA(n+1) + diphosphate. DNA-dependent RNA polymerase catalyzes the transcription of DNA into RNA using the four ribonucleoside triphosphates as substrates. This chain is DNA-directed RNA polymerase subunit beta, found in Clostridium novyi (strain NT).